The primary structure comprises 506 residues: Maturase K (506 aa).

Belongs to the intron maturase 2 family. MatK subfamily.

Its subcellular location is the plastid. It localises to the chloroplast. In terms of biological role, usually encoded in the trnK tRNA gene intron. Probably assists in splicing its own and other chloroplast group II introns. This Styphnolobium japonicum (Japanese pagoda tree) protein is Maturase K.